Here is a 378-residue protein sequence, read N- to C-terminus: Succinyl-diaminopimelate desuccinylase (378 aa).

Zn(2+) is bound at residue His-68. Residue Asp-70 is part of the active site. Residue Asp-101 coordinates Zn(2+). Glu-135 acts as the Proton acceptor in catalysis. Zn(2+) contacts are provided by Glu-136, Glu-164, and His-350.

It belongs to the peptidase M20A family. DapE subfamily. As to quaternary structure, homodimer. It depends on Zn(2+) as a cofactor. Co(2+) serves as cofactor.

It catalyses the reaction N-succinyl-(2S,6S)-2,6-diaminopimelate + H2O = (2S,6S)-2,6-diaminopimelate + succinate. It functions in the pathway amino-acid biosynthesis; L-lysine biosynthesis via DAP pathway; LL-2,6-diaminopimelate from (S)-tetrahydrodipicolinate (succinylase route): step 3/3. Its function is as follows. Catalyzes the hydrolysis of N-succinyl-L,L-diaminopimelic acid (SDAP), forming succinate and LL-2,6-diaminopimelate (DAP), an intermediate involved in the bacterial biosynthesis of lysine and meso-diaminopimelic acid, an essential component of bacterial cell walls. This is Succinyl-diaminopimelate desuccinylase from Acinetobacter baumannii (strain ATCC 17978 / DSM 105126 / CIP 53.77 / LMG 1025 / NCDC KC755 / 5377).